A 716-amino-acid polypeptide reads, in one-letter code: Polyribonucleotide nucleotidyltransferase (716 aa).

2 residues coordinate Mg(2+): Asp485 and Asp491. Residues 552–611 (PRFTTIKIDQDKIKDVIGKGGAVIRELTESTNTNIEIGDDGTIKVAASDQADADAAIEKI) form the KH domain. An S1 motif domain is found at 621–689 (GKIYQGKVAR…RQGRVRLSMK (69 aa)). A compositionally biased stretch (basic and acidic residues) spans 689 to 698 (KEAAEKKEEP). The tract at residues 689–716 (KEAAEKKEEPAPEAPAEPAAEEENKSEE) is disordered. Residues 707–716 (AAEEENKSEE) show a composition bias toward acidic residues.

This sequence belongs to the polyribonucleotide nucleotidyltransferase family. Component of the RNA degradosome, which is a multiprotein complex involved in RNA processing and mRNA degradation. The cofactor is Mg(2+).

The protein resides in the cytoplasm. The catalysed reaction is RNA(n+1) + phosphate = RNA(n) + a ribonucleoside 5'-diphosphate. Involved in mRNA degradation. Catalyzes the phosphorolysis of single-stranded polyribonucleotides processively in the 3'- to 5'-direction. The chain is Polyribonucleotide nucleotidyltransferase from Idiomarina loihiensis (strain ATCC BAA-735 / DSM 15497 / L2-TR).